The primary structure comprises 129 residues: uncharacterized protein (129 aa).

Residues methionine 1–proline 13 show a composition bias toward low complexity. Residues methionine 1–glutamate 129 are disordered. Basic and acidic residues predominate over residues isoleucine 34 to alanine 94. The span at valine 117 to glutamate 129 shows a compositional bias: low complexity.

This is an uncharacterized protein from Caenorhabditis elegans.